The sequence spans 1040 residues: V(D)J recombination-activating protein 1 (1040 aa).

Residues 39–53 are compositionally biased toward basic and acidic residues; the sequence is EKAPEEAQKEKDSSE. The interval 39-71 is disordered; the sequence is EKAPEEAQKEKDSSEGKPYLEQSPVVPEKPGGQ. Residue lysine 233 forms a Glycyl lysine isopeptide (Lys-Gly) (interchain with G-Cter in ubiquitin) linkage. 15 residues coordinate Zn(2+): cysteine 266, histidine 270, cysteine 290, cysteine 293, histidine 295, cysteine 305, histidine 307, cysteine 310, cysteine 313, cysteine 325, cysteine 328, cysteine 355, cysteine 360, histidine 372, and histidine 376. Residues 290 to 329 form an RING-type zinc finger; the sequence is CQICEHILADPVETSCKHLFCRICILRCLKVMGSYCPSCR. An RAG1-type zinc finger spans residues 351 to 380; sequence LMVKCPAQDCNEEVSLEKYNHHVSSHKESK. Residues 389-456 constitute a DNA-binding region (NBD); the sequence is GGRPRQHLLS…QADELEAIMQ (68 aa). Aspartate 600, aspartate 708, and glutamate 962 together coordinate a divalent metal cation.

It belongs to the RAG1 family. Homodimer. Component of the RAG complex composed of core components RAG1 and RAG2, and associated component HMGB1 or HMGB2. Interacts with DCAF1, leading to recruitment of the CUL4A-RBX1-DDB1-DCAF1/VPRBP complex to ubiquitinate proteins and limit error-prone repair during V(D)J recombination. Mg(2+) is required as a cofactor. Requires Mn(2+) as cofactor. Post-translationally, autoubiquitinated in the presence of CDC34/UBCH3. Maturing lymphoid cells and central nervous system.

Its subcellular location is the nucleus. The catalysed reaction is S-ubiquitinyl-[E2 ubiquitin-conjugating enzyme]-L-cysteine + [acceptor protein]-L-lysine = [E2 ubiquitin-conjugating enzyme]-L-cysteine + N(6)-ubiquitinyl-[acceptor protein]-L-lysine.. Catalytic component of the RAG complex, a multiprotein complex that mediates the DNA cleavage phase during V(D)J recombination. V(D)J recombination assembles a diverse repertoire of immunoglobulin and T-cell receptor genes in developing B and T-lymphocytes through rearrangement of different V (variable), in some cases D (diversity), and J (joining) gene segments. In the RAG complex, RAG1 mediates the DNA-binding to the conserved recombination signal sequences (RSS) and catalyzes the DNA cleavage activities by introducing a double-strand break between the RSS and the adjacent coding segment. RAG2 is not a catalytic component but is required for all known catalytic activities. DNA cleavage occurs in 2 steps: a first nick is introduced in the top strand immediately upstream of the heptamer, generating a 3'-hydroxyl group that can attack the phosphodiester bond on the opposite strand in a direct transesterification reaction, thereby creating 4 DNA ends: 2 hairpin coding ends and 2 blunt, 5'-phosphorylated ends. The chromatin structure plays an essential role in the V(D)J recombination reactions and the presence of histone H3 trimethylated at 'Lys-4' (H3K4me3) stimulates both the nicking and haipinning steps. The RAG complex also plays a role in pre-B cell allelic exclusion, a process leading to expression of a single immunoglobulin heavy chain allele to enforce clonality and monospecific recognition by the B-cell antigen receptor (BCR) expressed on individual B-lymphocytes. The introduction of DNA breaks by the RAG complex on one immunoglobulin allele induces ATM-dependent repositioning of the other allele to pericentromeric heterochromatin, preventing accessibility to the RAG complex and recombination of the second allele. In addition to its endonuclease activity, RAG1 also acts as an E3 ubiquitin-protein ligase that mediates monoubiquitination of histone H3. Histone H3 monoubiquitination is required for the joining step of V(D)J recombination. Mediates polyubiquitination of KPNA1. This is V(D)J recombination-activating protein 1 (Rag1) from Mus musculus (Mouse).